Here is a 20-residue protein sequence, read N- to C-terminus: VQGMVYCDTCRSANALGFMR.

This sequence belongs to the Ole e I family.

Its subcellular location is the secreted. The chain is Pollen allergen Beta v 1 from Beta vulgaris (Sugar beet).